The primary structure comprises 416 residues: E3 ubiquitin-protein ligase makorin-2 (416 aa).

2 C3H1-type zinc fingers span residues 2-29 and 31-58; these read STKQ…HDLA and SKPS…HTKP. Positions 61-144 are disordered; that stretch reads AAGGAVGPAP…DPQTSPEMKP (84 aa). The segment covering 95–123 has biased composition (basic and acidic residues); the sequence is HSNEPGKREKKTLVLRDRNLTGLAEDKTP. At serine 139 the chain carries Phosphoserine. The C3H1-type 3 zinc-finger motif lies at 165-192; the sequence is SNEPQLCPYAAAGECRFGDACVYLHGDM. The tract at residues 193 to 222 is makorin-type Cys-His; the sequence is CEICRLQVLHPFDPEQRKAHEKMCMSTFEH. The RING-type zinc-finger motif lies at 238–292; it reads CSICMEVILEKASASERRFGILSNCSHTYCLSCIRQWRCAKQFENPIIKSCPECR. The C3H1-type 4 zinc finger occupies 321-350; that stretch reads GMGKKACKYFEQGKGTCPFGSKCLYRHAYP.

Interacts with PDLIM2 (via LIM zinc-binding domain). Interacts with RELA. In terms of tissue distribution, highly expressed in the testis, and lower expression in the brain, thymus, heart, lung, liver, spleen, kidney, ovary, uterus, and seminal vesicle (at protein level). Expressed in primary immune cells, such as CD4-positive and CD8-positive T cells, CD19-positive B cells and CD11c-positive dendritic cells, and in embryonic fibroblasts (at protein level).

The protein localises to the cytoplasm. It localises to the nucleus. The enzyme catalyses S-ubiquitinyl-[E2 ubiquitin-conjugating enzyme]-L-cysteine + [acceptor protein]-L-lysine = [E2 ubiquitin-conjugating enzyme]-L-cysteine + N(6)-ubiquitinyl-[acceptor protein]-L-lysine.. The protein operates within protein modification; protein ubiquitination. E3 ubiquitin ligase catalyzing the covalent attachment of ubiquitin moieties onto substrate proteins. Promotes the polyubiquitination and proteasome-dependent degradation of RELA/p65, thereby suppressing RELA-mediated NF-kappa-B transactivation and negatively regulating inflammatory responses. Plays a role in the regulation of spermiation and in male fertility. This is E3 ubiquitin-protein ligase makorin-2 (Mkrn2) from Mus musculus (Mouse).